The chain runs to 199 residues: MKKKPTLEFAKIVSGVFSNKEQALNNPKKFAHIQIHIRPLFFKTYNCFAFYSEQRYQHDIWNPYRQSINKLSQEEEIFIFSNYKIEDKERFTGGALDISLLDKISKYKLYKKPGCSMYFKETNPGNFLGTIESGCKCFIEYGSDKTYVKSKVTVNKNILISEDSGYAIETDKKVWGSEFGPLIFKKIINFDCFINEYWK.

It belongs to the CpcT/CpeT biliprotein lyase family.

Its function is as follows. Covalently attaches a chromophore to Cys residue(s) of phycobiliproteins. The sequence is that of Chromophore lyase CpcT/CpeT from Prochlorococcus marinus (strain NATL1A).